Consider the following 339-residue polypeptide: Geranylgeranyl pyrophosphate synthase AN1592 (339 aa).

Isopentenyl diphosphate is bound by residues lysine 41, arginine 44, and histidine 73. Mg(2+) is bound by residues aspartate 80 and aspartate 84. Residue arginine 89 coordinates dimethylallyl diphosphate. Isopentenyl diphosphate is bound at residue arginine 90. Positions 192, 193, and 228 each coordinate dimethylallyl diphosphate. Position 231 (aspartate 231) interacts with Mg(2+). Asparagine 235, lysine 245, and lysine 255 together coordinate dimethylallyl diphosphate.

This sequence belongs to the FPP/GGPP synthase family. Mg(2+) serves as cofactor.

The catalysed reaction is isopentenyl diphosphate + dimethylallyl diphosphate = (2E)-geranyl diphosphate + diphosphate. It carries out the reaction isopentenyl diphosphate + (2E)-geranyl diphosphate = (2E,6E)-farnesyl diphosphate + diphosphate. It catalyses the reaction isopentenyl diphosphate + (2E,6E)-farnesyl diphosphate = (2E,6E,10E)-geranylgeranyl diphosphate + diphosphate. It participates in secondary metabolite biosynthesis. Functionally, geranylgeranyl pyrophosphate synthase; part of the gene cluster that mediates the biosynthesis of erinacines, cyathane-xylosides that show unique biological activities, including leishmanicidal activity, stimulating activity for nerve growth-factor synthesis, and agonistic activity toward the kappa opioid receptor. The geranylgeranyl diphosphate (GGPP) synthase eriE catalyzes the first step in erinacines biosynthesis via conversion of farnesyl pyrophosphate and isopentyl pyrophosphate into geranylgeranyl pyrophosphate (GGPP). GGPP is then substrate of the diterpene cyclase eriG for the production of cyatha-3,12-diene. The cytochrome P450 monooxygenase eriI then hydroxylates cyatha-3,12-diene at C-14 of the seven-membered ring to produce erinacol, which is further hydroxylated at C-15 by the cytochrome P450 monooxygenase eriC to yield cyathadiol. The cytochrome P450 monooxygenase eriA then catalyzes C-11 hydroxylation in the presence of the short chain dehydrogenase/reductase (SDR) eriH, which leads to the production of cyathatriol. The acetyltransferase eriL converts cyathatriol into 11-O-acetyl-cyathatriol. The SDR eriH catalyzes further oxidation of 11-O-acetyl-cyathatriol into 1-O-acetylcyathin A3. Finally, the glycosyl transferase eriJ tranfers xylose from UDP-xylose onto C-14 of 11-O-acetyl-cyathatriol to form eracine Q. EriJ is also able to convert 11-O-acetyl-cyathatriol to eracine Q2 by using UDP-D-glucose as cosubstrate, but at a lower rate. In the absence of eriL and eriJ, the SDR eriH is able to convert cyathatriol to cyathin A3; this is likely a switching mechanism in the biosynthesis of cyathins (C-14 ketogroup)and erinacines (C-14 glycosylated group). The roles of the SDR eriB, the polyprenyl transferase eriF and the dehydrogenase eriK have still to be identified. In Hericium erinaceus (Lion's mane mushroom), this protein is Geranylgeranyl pyrophosphate synthase AN1592.